Consider the following 202-residue polypeptide: Small ribosomal subunit protein uS4c-1 (202 aa).

The S4 RNA-binding domain maps to 90 to 152 (MRLDNIVLRA…NKSRQLIDLN (63 aa)).

This sequence belongs to the universal ribosomal protein uS4 family. In terms of assembly, part of the 30S ribosomal subunit. Contacts protein S5. The interaction surface between S4 and S5 is involved in control of translational fidelity.

The protein resides in the plastid. It localises to the chloroplast. Functionally, one of the primary rRNA binding proteins, it binds directly to 16S rRNA where it nucleates assembly of the body of the 30S subunit. Its function is as follows. With S5 and S12 plays an important role in translational accuracy. The protein is Small ribosomal subunit protein uS4c-1 of Cyanidium caldarium (Red alga).